We begin with the raw amino-acid sequence, 714 residues long: T-cell activation Rho GTPase-activating protein (714 aa).

Residues 88–277 (QPLSIICGEN…FLIDNCFEIF (190 aa)) form the Rho-GAP domain. 5 disordered regions span residues 290–357 (DDSL…ESSV), 370–419 (QDRR…AEDP), 451–508 (QGHI…HSMS), 520–563 (RTSS…QSQT), and 623–650 (KPST…HRLS). A compositionally biased stretch (polar residues) spans 299–311 (SDVSTLQNDSAYD). Phosphoserine is present on Ser398. The span at 459–471 (SRSSPGESLGSSP) shows a compositional bias: low complexity. 2 stretches are compositionally biased toward basic and acidic residues: residues 492-501 (KTDKTKPQRE) and 527-545 (EKSK…RKES).

As to expression, highly expressed in testis.

Functionally, may function as a GTPase-activating protein. May play a role in transmission ratio distortion (TRD) in mouse, in which heterozygous males for t-locus transmit their t-carrying chromosome to 95% or more of their offspring. The sequence is that of T-cell activation Rho GTPase-activating protein (Tagap) from Mus musculus (Mouse).